The following is a 412-amino-acid chain: Putative competence-damage inducible protein (412 aa).

Belongs to the CinA family.

This is Putative competence-damage inducible protein from Bacillus cereus (strain AH820).